Consider the following 446-residue polypeptide: Hepatocyte nuclear factor 4-beta (446 aa).

Positions 47–122 (NSFCAICGDR…AGMKKEAVQN (76 aa)) form a DNA-binding region, nuclear receptor. 2 NR C4-type zinc fingers span residues 50–70 (CAIC…CDGC) and 86–110 (CRFS…LRKC). Positions 137 to 366 (NGSLSINVLT…SLLQELLLGG (230 aa)) constitute an NR LBD domain.

Belongs to the nuclear hormone receptor family. NR2 subfamily. Homodimerization is required for HNF4-alpha to bind to its recognition site. As to expression, expressed in liver, kidney, stomach, intestine, lung, ovary, and testis. Not expressed in fat, muscle and brain.

It localises to the nucleus. Functionally, transcription factor; binds and activates the promoter for the HNF1-alpha gene. Seems to have a lower DNA binding activity than HNF4-alpha and is a weaker transactivator than the alpha isoform. In Xenopus laevis (African clawed frog), this protein is Hepatocyte nuclear factor 4-beta (hnf4b).